The primary structure comprises 631 residues: 1-deoxy-D-xylulose-5-phosphate synthase (631 aa).

Thiamine diphosphate-binding positions include H87 and 128–130; that span reads GHS. Residue D159 participates in Mg(2+) binding. Residues 160 to 161, N188, F295, and E377 each bind thiamine diphosphate; that span reads GA. N188 lines the Mg(2+) pocket.

Belongs to the transketolase family. DXPS subfamily. In terms of assembly, homodimer. Mg(2+) serves as cofactor. Thiamine diphosphate is required as a cofactor.

The enzyme catalyses D-glyceraldehyde 3-phosphate + pyruvate + H(+) = 1-deoxy-D-xylulose 5-phosphate + CO2. It participates in metabolic intermediate biosynthesis; 1-deoxy-D-xylulose 5-phosphate biosynthesis; 1-deoxy-D-xylulose 5-phosphate from D-glyceraldehyde 3-phosphate and pyruvate: step 1/1. Its function is as follows. Catalyzes the acyloin condensation reaction between C atoms 2 and 3 of pyruvate and glyceraldehyde 3-phosphate to yield 1-deoxy-D-xylulose-5-phosphate (DXP). The chain is 1-deoxy-D-xylulose-5-phosphate synthase from Pseudomonas putida (strain ATCC 700007 / DSM 6899 / JCM 31910 / BCRC 17059 / LMG 24140 / F1).